The primary structure comprises 200 residues: Superoxide dismutase [Fe] (200 aa).

Fe cation contacts are provided by His-28, His-80, Asp-162, and His-166.

This sequence belongs to the iron/manganese superoxide dismutase family. In terms of assembly, homodimer. Requires Fe cation as cofactor.

It carries out the reaction 2 superoxide + 2 H(+) = H2O2 + O2. Its function is as follows. Destroys superoxide anion radicals which are normally produced within the cells and which are toxic to biological systems. This chain is Superoxide dismutase [Fe] (sodB), found in Nostoc sp. (strain PCC 7120 / SAG 25.82 / UTEX 2576).